Consider the following 413-residue polypeptide: Arginine biosynthesis bifunctional protein ArgJ (413 aa).

Substrate is bound by residues T160, K186, T197, E284, N408, and S413. The Nucleophile role is filled by T197.

Belongs to the ArgJ family. Heterotetramer of two alpha and two beta chains.

It localises to the cytoplasm. The catalysed reaction is N(2)-acetyl-L-ornithine + L-glutamate = N-acetyl-L-glutamate + L-ornithine. It catalyses the reaction L-glutamate + acetyl-CoA = N-acetyl-L-glutamate + CoA + H(+). The protein operates within amino-acid biosynthesis; L-arginine biosynthesis; L-ornithine and N-acetyl-L-glutamate from L-glutamate and N(2)-acetyl-L-ornithine (cyclic): step 1/1. Its pathway is amino-acid biosynthesis; L-arginine biosynthesis; N(2)-acetyl-L-ornithine from L-glutamate: step 1/4. In terms of biological role, catalyzes two activities which are involved in the cyclic version of arginine biosynthesis: the synthesis of N-acetylglutamate from glutamate and acetyl-CoA as the acetyl donor, and of ornithine by transacetylation between N(2)-acetylornithine and glutamate. The chain is Arginine biosynthesis bifunctional protein ArgJ from Burkholderia pseudomallei (strain 1710b).